Reading from the N-terminus, the 138-residue chain is MVEYDYEELLERAYEQLPEEVLEDRRFEMPKPKVSVEGKTTVIRNFKEISKKLDRDPEHITKYFLKELGTAGHVDGGRLILHGVYHPKLVEEELKNYVEEFVLCPECGKPDTKLVREDRQWILKCEACGAWSSVRRLK.

Belongs to the eIF-2-beta/eIF-5 family. Heterotrimer composed of an alpha, a beta and a gamma chain.

Its function is as follows. eIF-2 functions in the early steps of protein synthesis by forming a ternary complex with GTP and initiator tRNA. This is Translation initiation factor 2 subunit beta from Methanopyrus kandleri (strain AV19 / DSM 6324 / JCM 9639 / NBRC 100938).